We begin with the raw amino-acid sequence, 570 residues long: Sulfite reductase [NADPH] hemoprotein beta-component (570 aa).

4 residues coordinate [4Fe-4S] cluster: Cys-434, Cys-440, Cys-479, and Cys-483. Residue Cys-483 participates in siroheme binding.

Belongs to the nitrite and sulfite reductase 4Fe-4S domain family. In terms of assembly, alpha(8)-beta(8). The alpha component is a flavoprotein, the beta component is a hemoprotein. Siroheme is required as a cofactor. Requires [4Fe-4S] cluster as cofactor.

It catalyses the reaction hydrogen sulfide + 3 NADP(+) + 3 H2O = sulfite + 3 NADPH + 4 H(+). It participates in sulfur metabolism; hydrogen sulfide biosynthesis; hydrogen sulfide from sulfite (NADPH route): step 1/1. Its function is as follows. Component of the sulfite reductase complex that catalyzes the 6-electron reduction of sulfite to sulfide. This is one of several activities required for the biosynthesis of L-cysteine from sulfate. This Salmonella agona (strain SL483) protein is Sulfite reductase [NADPH] hemoprotein beta-component.